Reading from the N-terminus, the 341-residue chain is Putative amino-acid ABC transporter-binding protein YhdW (341 aa).

The N-terminal stretch at 1-19 is a signal peptide; the sequence is MKKMMIATLAAASVLLAVA.

Belongs to the bacterial solute-binding protein 3 family.

It is found in the periplasm. Probably part of the binding-protein-dependent transport system YdhWXYZ for an amino acid. The polypeptide is Putative amino-acid ABC transporter-binding protein YhdW (yhdW) (Escherichia coli (strain K12)).